We begin with the raw amino-acid sequence, 103 residues long: N(4)-acetylcytidine amidohydrolase (103 aa).

Residues 6 to 100 (ITFFQRFQND…NQMQFYVIDF (95 aa)) enclose the ASCH domain. The active-site Proton acceptor is the K21. The active-site Nucleophile is the T24. Catalysis depends on E74, which acts as the Proton donor.

This sequence belongs to the N(4)-acetylcytidine amidohydrolase family.

It catalyses the reaction N(4)-acetylcytidine + H2O = cytidine + acetate + H(+). The enzyme catalyses N(4)-acetyl-2'-deoxycytidine + H2O = 2'-deoxycytidine + acetate + H(+). The catalysed reaction is N(4)-acetylcytosine + H2O = cytosine + acetate + H(+). In terms of biological role, catalyzes the hydrolysis of N(4)-acetylcytidine (ac4C). The sequence is that of N(4)-acetylcytidine amidohydrolase (yqfB) from Salmonella arizonae (strain ATCC BAA-731 / CDC346-86 / RSK2980).